The primary structure comprises 414 residues: Probable serine/threonine-protein kinase PBL26 (414 aa).

A lipid anchor (S-palmitoyl cysteine) is attached at Cys-3. A compositionally biased stretch (basic and acidic residues) spans 17–41 (RDSDNSYRRNGEVTGRDNNKTHPEN). The segment at 17–55 (RDSDNSYRRNGEVTGRDNNKTHPENPKTVNEQNKNNDED) is disordered. Positions 79 to 356 (FRQECLIGEG…SDVVTALGFL (278 aa)) constitute a Protein kinase domain. Residues 85 to 93 (IGEGGFGRV) and Lys-108 contribute to the ATP site. The residue at position 153 (Tyr-153) is a Phosphotyrosine. The active-site Proton acceptor is Asp-206. At Ser-240 the chain carries Phosphoserine. Thr-246 carries the phosphothreonine modification. A Phosphotyrosine modification is found at Tyr-254. Residues 364–394 (ISVPHYDDPPQPSDETSVEDSVAAEERERAV) are disordered.

This sequence belongs to the protein kinase superfamily. Ser/Thr protein kinase family. Post-translationally, palmitoylation at Cys-3 and Cys-6 are required for plasma membrane location.

It is found in the cell membrane. It catalyses the reaction L-seryl-[protein] + ATP = O-phospho-L-seryl-[protein] + ADP + H(+). The enzyme catalyses L-threonyl-[protein] + ATP = O-phospho-L-threonyl-[protein] + ADP + H(+). Its function is as follows. May be involved in plant defense signaling. This is Probable serine/threonine-protein kinase PBL26 from Arabidopsis thaliana (Mouse-ear cress).